Reading from the N-terminus, the 580-residue chain is PTS system fructose-specific EIIB'BC component (580 aa).

2 PTS EIIB type-2 domains span residues 3-100 (MKIA…QAAE) and 124-221 (KKIV…NAFA). Residues Cys11 and Cys132 each act as phosphocysteine intermediate; for EIIB activity in the active site. 2 positions are modified to phosphocysteine; by EIIA: Cys11 and Cys132. The PTS EIIC type-2 domain occupies 244–579 (VYKHLMTGVS…KKSAQAKAVA (336 aa)). 9 helical membrane passes run 254-274 (HMLPVVVAGGLIIALSFVFGI), 292-312 (GGSAFALMIPVLAGYIAFSIA), 322-342 (IGGMLASSTGAGFLGGIVAGF), 367-387 (ILIIPFIASLFTGLVMIYVVG), 408-428 (NAILLGIVLGAMMCFDLGGPV), 448-468 (MAAIMAAGMVPALGMGLATFI), 480-500 (AGKASFVLGLCFISEGAIPFA), 507-527 (VIPACMVGGAVTGALSMLFGA), and 537-557 (FVLLIPNAISPVLLYLVAIAV).

It is found in the cell inner membrane. It catalyses the reaction D-fructose(out) + N(pros)-phospho-L-histidyl-[protein] = D-fructose 1-phosphate(in) + L-histidyl-[protein]. Its function is as follows. The phosphoenolpyruvate-dependent sugar phosphotransferase system (sugar PTS), a major carbohydrate active transport system, catalyzes the phosphorylation of incoming sugar substrates concomitantly with their translocation across the cell membrane. The enzyme II FruAB PTS system is involved in fructose transport. The sequence is that of PTS system fructose-specific EIIB'BC component from Vibrio cholerae serotype O1 (strain ATCC 39315 / El Tor Inaba N16961).